The chain runs to 402 residues: E3 ubiquitin-protein ligase makorin-2 (402 aa).

3 C3H1-type zinc fingers span residues T2–S29, S31–L58, and Q141–K168. Positions C169 to A198 are makorin-type Cys-His. The RING-type zinc-finger motif lies at C214–R268. The C3H1-type 4 zinc-finger motif lies at G297–P326.

The protein resides in the cytoplasm. Its subcellular location is the nucleus. It carries out the reaction S-ubiquitinyl-[E2 ubiquitin-conjugating enzyme]-L-cysteine + [acceptor protein]-L-lysine = [E2 ubiquitin-conjugating enzyme]-L-cysteine + N(6)-ubiquitinyl-[acceptor protein]-L-lysine.. It functions in the pathway protein modification; protein ubiquitination. In terms of biological role, E3 ubiquitin ligase catalyzing the covalent attachment of ubiquitin moieties onto substrate proteins. Inhibits neurogenesis and axis formation during embryonic development by modulating the phosphatidylinositol 3-kinase (PI3K) pathway. Acts downstream of PI3K and akt1 to up-regulate gsk3b mRNA expression. The sequence is that of E3 ubiquitin-protein ligase makorin-2 from Takifugu rubripes (Japanese pufferfish).